Here is a 234-residue protein sequence, read N- to C-terminus: 1-(5-phosphoribosyl)-5-[(5-phosphoribosylamino)methylideneamino] imidazole-4-carboxamide isomerase (234 aa).

The active-site Proton acceptor is aspartate 9. Catalysis depends on aspartate 131, which acts as the Proton donor.

Belongs to the HisA/HisF family.

The protein localises to the cytoplasm. It carries out the reaction 1-(5-phospho-beta-D-ribosyl)-5-[(5-phospho-beta-D-ribosylamino)methylideneamino]imidazole-4-carboxamide = 5-[(5-phospho-1-deoxy-D-ribulos-1-ylimino)methylamino]-1-(5-phospho-beta-D-ribosyl)imidazole-4-carboxamide. The protein operates within amino-acid biosynthesis; L-histidine biosynthesis; L-histidine from 5-phospho-alpha-D-ribose 1-diphosphate: step 4/9. The chain is 1-(5-phosphoribosyl)-5-[(5-phosphoribosylamino)methylideneamino] imidazole-4-carboxamide isomerase from Staphylococcus epidermidis (strain ATCC 12228 / FDA PCI 1200).